Consider the following 225-residue polypeptide: Cytidylate kinase (225 aa).

11–19 lines the ATP pocket; sequence GPAAAGKST.

It belongs to the cytidylate kinase family. Type 1 subfamily.

It is found in the cytoplasm. The catalysed reaction is CMP + ATP = CDP + ADP. It carries out the reaction dCMP + ATP = dCDP + ADP. This is Cytidylate kinase from Bacillus cereus (strain AH187).